The sequence spans 1164 residues: DNA-directed RNA polymerase 133 kDa polypeptide (1164 aa).

The protein belongs to the RNA polymerase beta chain family. The DNA-dependent RNA polymerase used for intermediate and late genes expression consists of eight subunits 147 kDa, 133 kDa, 35 kDa, 30 kDa, 22 kDa, 19 kDa, 18 kDa and 7 kDa totalling more than 500 kDa in mass. The same holoenzyme, with the addition of the transcription-specificity factor RAP94, is used for early gene expression.

The protein resides in the virion. The catalysed reaction is RNA(n) + a ribonucleoside 5'-triphosphate = RNA(n+1) + diphosphate. Functionally, part of the DNA-dependent RNA polymerase which catalyzes the transcription of viral DNA into RNA using the four ribonucleoside triphosphates as substrates. Responsible for the transcription of early, intermediate and late genes. DNA-dependent RNA polymerase associates with the early transcription factor (ETF), itself composed of D6 and A7, thereby allowing the early genes transcription. Late transcription, and probably also intermediate transcription, require newly synthesized RNA polymerase. The chain is DNA-directed RNA polymerase 133 kDa polypeptide (RPO132) from Homo sapiens (Human).